A 215-amino-acid chain; its full sequence is Cytochrome b6 (215 aa).

Residues 32-52 form a helical membrane-spanning segment; the sequence is IFYCFGGIVFTCFLVQVATGF. Cys35 serves as a coordination point for heme c. Residues His86 and His100 each contribute to the heme b site. 3 consecutive transmembrane segments (helical) span residues 90–110, 116–136, and 186–206; these read ASMM…TGGF, LTWV…VTGY, and AHTF…FLMI. His187 and His202 together coordinate heme b.

This sequence belongs to the cytochrome b family. PetB subfamily. The 4 large subunits of the cytochrome b6-f complex are cytochrome b6, subunit IV (17 kDa polypeptide, PetD), cytochrome f and the Rieske protein, while the 4 small subunits are PetG, PetL, PetM and PetN. The complex functions as a dimer. Requires heme b as cofactor. Heme c is required as a cofactor.

The protein resides in the plastid. It is found in the chloroplast thylakoid membrane. Component of the cytochrome b6-f complex, which mediates electron transfer between photosystem II (PSII) and photosystem I (PSI), cyclic electron flow around PSI, and state transitions. This is Cytochrome b6 from Trieres chinensis (Marine centric diatom).